A 266-amino-acid chain; its full sequence is Expansin-A13 (266 aa).

Residues 1–19 (MQRFLLPLLFLALSPPAIC) form the signal peptide. The 114-residue stretch at 58 to 171 (GGACGYGDLV…RRINCRKEGS (114 aa)) folds into the Expansin-like EG45 domain. The 80-residue stretch at 181 to 260 (IFISVLITNV…NWNYGQTFEG (80 aa)) folds into the Expansin-like CBD domain.

It belongs to the expansin family. Expansin A subfamily.

It localises to the secreted. The protein resides in the cell wall. The protein localises to the membrane. Causes loosening and extension of plant cell walls by disrupting non-covalent bonding between cellulose microfibrils and matrix glucans. No enzymatic activity has been found. The polypeptide is Expansin-A13 (EXPA13) (Arabidopsis thaliana (Mouse-ear cress)).